Here is a 658-residue protein sequence, read N- to C-terminus: Glycogen debranching enzyme (658 aa).

Catalysis depends on Asp336, which acts as the Nucleophile. Catalysis depends on Glu371, which acts as the Proton donor. The interval 459-484 (EANGEENRDGTNSNYSDNHGKEGLGG) is disordered.

The protein belongs to the glycosyl hydrolase 13 family.

It catalyses the reaction Hydrolysis of (1-&gt;6)-alpha-D-glucosidic linkages to branches with degrees of polymerization of three or four glucose residues in limit dextrin.. Its pathway is glycan degradation; glycogen degradation. In terms of biological role, removes maltotriose and maltotetraose chains that are attached by 1,6-alpha-linkage to the limit dextrin main chain, generating a debranched limit dextrin. This chain is Glycogen debranching enzyme, found in Salmonella choleraesuis (strain SC-B67).